A 330-amino-acid chain; its full sequence is DNA-directed RNA polymerase subunit alpha (330 aa).

Positions 1–237 (MYTEINEMLT…RQLHAFVDMK (237 aa)) are alpha N-terminal domain (alpha-NTD). The alpha C-terminal domain (alpha-CTD) stretch occupies residues 251 to 330 (FDPVLLRSVD…ENWPPASLGE (80 aa)).

It belongs to the RNA polymerase alpha chain family. In terms of assembly, homodimer. The RNAP catalytic core consists of 2 alpha, 1 beta, 1 beta' and 1 omega subunit. When a sigma factor is associated with the core the holoenzyme is formed, which can initiate transcription.

The catalysed reaction is RNA(n) + a ribonucleoside 5'-triphosphate = RNA(n+1) + diphosphate. In terms of biological role, DNA-dependent RNA polymerase catalyzes the transcription of DNA into RNA using the four ribonucleoside triphosphates as substrates. The chain is DNA-directed RNA polymerase subunit alpha from Legionella pneumophila (strain Paris).